Reading from the N-terminus, the 63-residue chain is Large ribosomal subunit protein bL28 (63 aa).

Belongs to the bacterial ribosomal protein bL28 family.

The protein is Large ribosomal subunit protein bL28 of Sulfurihydrogenibium sp. (strain YO3AOP1).